A 72-amino-acid chain; its full sequence is uncharacterized protein (72 aa).

It localises to the plastid. The protein localises to the chloroplast. This is an uncharacterized protein from Oenothera berteroana (Bertero's evening primrose).